A 243-amino-acid polypeptide reads, in one-letter code: Eukaryotic translation initiation factor 4E-2 (243 aa).

The protein belongs to the eukaryotic initiation factor 4E family. EIF4F is a multi-subunit complex, the composition of which varies with external and internal environmental conditions. It is composed of at least eIF4A, eIF4E and eIF4G. eIF4E is also known to interact with other partners.

In terms of biological role, recognizes and binds the 7-methylguanosine-containing mRNA cap during an early step in the initiation of protein synthesis and facilitates ribosome binding by inducing the unwinding of the mRNAs secondary structures. The protein is Eukaryotic translation initiation factor 4E-2 (tif452) of Schizosaccharomyces pombe (strain 972 / ATCC 24843) (Fission yeast).